A 645-amino-acid polypeptide reads, in one-letter code: 1,4-alpha-glucan branching enzyme GlgB (645 aa).

Catalysis depends on Asp309, which acts as the Nucleophile. The active-site Proton donor is Glu352. Residues Val619–Arg645 form a disordered region. Positions Arg636–Arg645 are enriched in polar residues.

Belongs to the glycosyl hydrolase 13 family. GlgB subfamily. As to quaternary structure, monomer.

It carries out the reaction Transfers a segment of a (1-&gt;4)-alpha-D-glucan chain to a primary hydroxy group in a similar glucan chain.. It functions in the pathway glycan biosynthesis; glycogen biosynthesis. Catalyzes the formation of the alpha-1,6-glucosidic linkages in glycogen by scission of a 1,4-alpha-linked oligosaccharide from growing alpha-1,4-glucan chains and the subsequent attachment of the oligosaccharide to the alpha-1,6 position. The protein is 1,4-alpha-glucan branching enzyme GlgB of Bacillus cereus (strain G9842).